A 700-amino-acid chain; its full sequence is Pyrroloquinoline quinone transporter (700 aa).

Positions 1 to 23 (MKIFSVRQTVLPALLVLSPVVFA) are cleaved as a signal peptide. Positions 39–157 (SELDTPAAVS…SGGVMNVTTQ (119 aa)) constitute a TBDR plug domain. 24 consecutive transmembrane segments (beta stranded) span residues 132–136 (NVEVL), 150–160 (GVMNVTTQTGQ), 162–171 (PPTIEASSYY), 177–186 (WRYGLKATGA), 195–204 (DVDYTVSTTR), 220–227 (LANAKLGV), 233–241 (SKLSLIFNS), 280–288 (QAGLRYERS), 295–301 (MSVMMYA), 335–344 (GIDSRWTHRG), 350–358 (VTFTTGLNY), 398–405 (DPYLQTQW), 411–419 (LSLDAGVRY), 447–456 (WLPAGSLKYA), 464–468 (YLAAG), 500–509 (TIEIGSKTRI), 511–520 (DGLLSLALFQ), 549–556 (GAELAWDQ), 563–570 (RVNASWTW), 597–604 (MGFASIGY), 611–617 (YAGTEAR), 637–647 (LVGLFTGYKYN), 651–659 (LTVDLFGRV), and 689–697 (YGVGMNIAW). Residues 162-697 (PPTIEASSYY…NYGVGMNIAW (536 aa)) form the TBDR beta-barrel domain. A TonB C-terminal box motif is present at residues 680-700 (YYEPSPGRNYGVGMNIAWRFE).

It belongs to the TonB-dependent receptor family.

It localises to the cell outer membrane. Its function is as follows. Mediates the TonB-dependent high affinity transport across the outer membrane of pyrroloquinoline quinone (PQQ), a redox cofactor required for the activity of Gcd and Asd dehydrogenases. The uptake process is energised via the TonB-ExbBD complex. Not involved in the transport of an iron-containing substrate under laboratory conditions. In Escherichia coli (strain K12), this protein is Pyrroloquinoline quinone transporter.